A 198-amino-acid chain; its full sequence is MKLNENVKIVAEKCVLVPYEPCHVEKYHKWMEDEEIRRLTGSERLSLEEEFEMQKSWREDDDKLTFIVLSREEGEETNRMLGDVNLFISKSENLEEEEDVGEVEVMIAEPRGRGKGIGQEAVSLIISWAFKNLQIARFCVKITEDNAPSLSLFEKKLGFKRVSYSSAFKEITMELPGERLESHFGRFLGENSQILEHK.

An N-acetyltransferase domain is found at 34–178 (EEIRRLTGSE…KEITMELPGE (145 aa)).

It belongs to the acetyltransferase family. GNAT subfamily.

In Caenorhabditis briggsae, this protein is N-acetyltransferase 9-like protein.